Reading from the N-terminus, the 179-residue chain is Crossover junction endodeoxyribonuclease RuvC (179 aa).

Active-site residues include aspartate 12, glutamate 72, and aspartate 144. Mg(2+) is bound by residues aspartate 12, glutamate 72, and aspartate 144.

It belongs to the RuvC family. In terms of assembly, homodimer which binds Holliday junction (HJ) DNA. The HJ becomes 2-fold symmetrical on binding to RuvC with unstacked arms; it has a different conformation from HJ DNA in complex with RuvA. In the full resolvosome a probable DNA-RuvA(4)-RuvB(12)-RuvC(2) complex forms which resolves the HJ. Mg(2+) is required as a cofactor.

Its subcellular location is the cytoplasm. It catalyses the reaction Endonucleolytic cleavage at a junction such as a reciprocal single-stranded crossover between two homologous DNA duplexes (Holliday junction).. Functionally, the RuvA-RuvB-RuvC complex processes Holliday junction (HJ) DNA during genetic recombination and DNA repair. Endonuclease that resolves HJ intermediates. Cleaves cruciform DNA by making single-stranded nicks across the HJ at symmetrical positions within the homologous arms, yielding a 5'-phosphate and a 3'-hydroxyl group; requires a central core of homology in the junction. The consensus cleavage sequence is 5'-(A/T)TT(C/G)-3'. Cleavage occurs on the 3'-side of the TT dinucleotide at the point of strand exchange. HJ branch migration catalyzed by RuvA-RuvB allows RuvC to scan DNA until it finds its consensus sequence, where it cleaves and resolves the cruciform DNA. This is Crossover junction endodeoxyribonuclease RuvC from Dechloromonas aromatica (strain RCB).